A 472-amino-acid chain; its full sequence is Glutamine synthetase (472 aa).

One can recognise a GS beta-grasp domain in the interval 17–101; the sequence is NNVKFVLLRF…IRCSVYEPTT (85 aa). A GS catalytic domain is found at 109 to 472; it reads PRSIAIRAEN…HPVEFEMYYA (364 aa). 2 residues coordinate Mg(2+): Glu-134 and Glu-136. Glu-212 is an ATP binding site. 2 residues coordinate Mg(2+): Glu-217 and Glu-225. L-glutamate is bound by residues 269-270 and Gly-270; that span reads NG. His-274 lines the Mg(2+) pocket. Residues 276–278 and Ser-278 each bind ATP; that span reads NMS. Residues Arg-326, Glu-332, and Arg-344 each contribute to the L-glutamate site. 3 residues coordinate ATP: Arg-344, Arg-349, and Lys-357. Glu-362 is a binding site for Mg(2+). Residue Arg-364 coordinates L-glutamate. At Tyr-402 the chain carries O-AMP-tyrosine.

The protein belongs to the glutamine synthetase family. Oligomer of 12 subunits arranged in the form of two hexameric ring. Mg(2+) is required as a cofactor.

Its subcellular location is the cytoplasm. It catalyses the reaction L-glutamate + NH4(+) + ATP = L-glutamine + ADP + phosphate + H(+). Its activity is regulated as follows. The activity of this enzyme could be controlled by adenylation under conditions of abundant glutamine. In terms of biological role, catalyzes the ATP-dependent biosynthesis of glutamine from glutamate and ammonia. The sequence is that of Glutamine synthetase from Haemophilus influenzae (strain ATCC 51907 / DSM 11121 / KW20 / Rd).